We begin with the raw amino-acid sequence, 278 residues long: Putative ABC transporter ATP-binding protein MJ1572 (278 aa).

An ABC transporter domain is found at Tyr-5–Glu-242. Position 38–45 (Gly-38–Thr-45) interacts with ATP.

The protein belongs to the ABC transporter superfamily.

The protein resides in the cell membrane. Probably part of an ABC transporter complex. Responsible for energy coupling to the transport system. The sequence is that of Putative ABC transporter ATP-binding protein MJ1572 from Methanocaldococcus jannaschii (strain ATCC 43067 / DSM 2661 / JAL-1 / JCM 10045 / NBRC 100440) (Methanococcus jannaschii).